Here is a 2167-residue protein sequence, read N- to C-terminus: MNSIINAASKVLRLQDDVKKATIILGDILILQPINHEVEPDVENLVQHELTKIIQGYPIQDNMIINSKKGTVEDDLCELNNYTCFALSKSFDLCHDSRNFNIAQPKRWIQLLETLTDSVSFAVIVQIILTLSNISLINKQTLGKLKKLRIRIFEILSNKNDSWKSTLLQKNLIEWYIFMLSVDCTPLELQNLYLHKELKFCNGILNSLTLQVSDPRSQNYLQFENTYKLFQIQKSSRINNSFLFYIEFNSVTSNRIMTIERHIYLEIKEGQFCISNDNYIIGLFENFEFEAGTLYFIGVLIDHNNRITLYVDGSMINQLTLFENSICQLSTCELGSMICSIKVYRFYLWDGLLTEFAINILQAIGTNYQYTFSKKKEGPEVLSLCQDFLIAKAHLMARPTTEISSTKYIDEIELLEMENIIIDVNPNDILQDFTESSNFTVKFEESTNSKNIPEVGKCYFYRSSNLVSKFVSIDSIRLAFLNMTESGSIDDLFHHVSHLMNLLRNIDILNWFKKDFGFPLFAYTLKQKITQDLSQPLNIQFFNLFLEFCGWDFNDISKSIILDTDAYENIVLNLDLWYMNEDQSSLASGGLEIIRFLFFQISSLMEASIYSKFNSNKFNDMNILEKLCLSYQAVTKRENQNSKFNELSSDLISVFVTLLKSNTDKRHLQWFLHLSYYFIKRKDVRSTEIILQAVDQLFSFYLDQGSDENAKILSEIIPLKLILMIMDQIVENNESNPITCLNILFKVVLTNKPLFKQFYKNDGLKLILTMLCKVGKSYREEIISLLLTYSIGNYTTANEIFSGAEDMIGGISNDKITAKEIIYLAVNFIEWHVINSNASDSSSVLDLNNHILRFVEDLKSLSAVPINESVFDPKKSYVMVSLLDLSIALNESEDISKFKSSSKVISELIKGNIMCALTKYAAYDFEVYMSTFFCHSTEYKLVYPKTVMNNSSYLELSFIVTLLPEILNDLVDSNNNLNLMMLKHPYTMSNLLYFLRKFRPDTSQIVMPKDFYFSSYTCLLHCVIQIDKSSFYHFKNVSKSQLLQDFKICIMNLIYSNTLKQIIWEKEEYEMFSESLMAHQEVLFAHGACDNETVGLLLIFFANRLRDCGYNKAVFNCMKVIIKNKERKLKEVACFFDPANKSEVLEGLSNILSCNNSETMNLITEQYPFFFNNTQQVRFINIVTNILFKNNNFSPISVRQIKNQVYEWKNARSEYVTQNNKKCLILFRKDNTSLDFKIKKSISRYTYNLKTDREENAVFYRNNLNLLIFHLKHTLEIQSNPNSSCKWSSDFAEDFDGMKRRLLPAWEPKYEPLINEEDANQDTITGGNRQRRESGSILSYEFIEHMETLESEPVGDLNENRKILRLLKDNDSIATIWNCSLIIGLEIKEGILIHGSNYLYFVSDYYFSLEDKKILKLSEVSQESRDMTVSLINGPDVKRVSTFLKHEVFVWKLLDITFVTKRPFLLRDVAIELLFKERVSAFFSFYNKRVRDDVLRVLNKIPKHLPADPIFSSVLQEINDRGNSIVARNGIGKASIASKFTSVFSANNSLIDGFEISKKWVRGEISNFYYLLSINILAGRSFNDLTQYPVFPWVIADYESNVLDLENPKTYRDLSKPMGAQSEKRKLQFIERYEALASLENADSAPFHYGTHYSSAMIVSSYLIRLKPFVESFLLLQGGSFGPADRLFSSLERAWSSASSENTTDVRELTPEFFFLPEFLINVNSYDFGTDQSGKKVDDVVLPPWANGDPKVFIQKNREALESPYVSAHLHEWIDLIFGYKQKGDIAVKSVNVFNRLSYPGAVNLDNIDDENERRAITGIIHNFGQTPLQIFQEPHPEKIACNVQQLTTEVWRKVPMKPIFEKTIFNLNEKNRSVDYVIHDPSYFDSLYWRGFAFPNLFFRTEESLVSLRIVHKNWLKIGLDIFKKTHMAQITSFAYWKLGEFITGDKNGLIKVWKYRKDKHSVSGNLENKKTMFGHLCELKEMRCYHDYNTLLTLDISGLVYVWDMINFELVRQITNDAQKVAISQHAGSIMVLTKNNAISIFNLNGQIYTSKKFEPAKIVSSIDFFDFTKLDAGYRKHIYWKEMEILLVGFEDGTIEIYELFLNFHNEWAIKLLKQLCTEKGKAITSIKGQGKTYLSQKRRKDTAEPHEIEVIAGTLDGRLAIWY.

One can recognise a BEACH-type PH domain in the interval 1368 to 1499; the sequence is KDNDSIATIW…VRDDVLRVLN (132 aa). The BEACH domain occupies 1545–1839; the sequence is SANNSLIDGF…QIFQEPHPEK (295 aa). K1667 participates in a covalent cross-link: Glycyl lysine isopeptide (Lys-Gly) (interchain with G-Cter in ubiquitin). WD repeat units follow at residues 1927 to 1965, 1976 to 2015, 2017 to 2054, 2072 to 2111, and 2129 to 2167; these read THMA…HSVS, GHLC…LVRQ, TNDA…YTSK, KLDA…HNEW, and SIKG…AIWY.

It localises to the cytoplasm. The protein localises to the membrane. Functionally, may be involved in protein sorting and cell wall formation. This is Beige protein homolog 1 (BPH1) from Saccharomyces cerevisiae (strain ATCC 204508 / S288c) (Baker's yeast).